The sequence spans 354 residues: GTPase Obg (354 aa).

The Obg domain maps to Met-1 to Leu-159. In terms of domain architecture, OBG-type G spans Ala-160–Glu-334. GTP is bound by residues Gly-166–Ser-173, Phe-191–His-195, Asp-213–Gly-216, Asn-284–Asp-287, and Ser-315–Met-317. Mg(2+) contacts are provided by Ser-173 and Thr-193.

It belongs to the TRAFAC class OBG-HflX-like GTPase superfamily. OBG GTPase family. In terms of assembly, monomer. It depends on Mg(2+) as a cofactor.

The protein resides in the cytoplasm. Its function is as follows. An essential GTPase which binds GTP, GDP and possibly (p)ppGpp with moderate affinity, with high nucleotide exchange rates and a fairly low GTP hydrolysis rate. Plays a role in control of the cell cycle, stress response, ribosome biogenesis and in those bacteria that undergo differentiation, in morphogenesis control. This is GTPase Obg from Nitrosospira multiformis (strain ATCC 25196 / NCIMB 11849 / C 71).